The sequence spans 1104 residues: MKKNLKRGELTKLKLVERWSATFTLAAFILFNSSFKVLAADKKVENSNNGQITREINADQISKTELNNEVATDNNRPLGPSIAPSRARNNKIYTFDELNRMNYSDLVELIKTISYENVPDLFNFNDGSYTFFSNRDRVQAIIYGLEDSGRTYTADDDKGIPTLVEFLRAGYYLGFYNKQLSYLNTPQLKNECLPAMKAIQYNSNFRLGTKAQDGVVEALGRLIGNASADPEVINNCIYVLSDFKDNIDKYGSNYSKGNAVFNLMKGIDYYTNSVIYNTKGYDAKNTEFYNRIDPYMERLESLCTIGDKLNNDNAWLVNNALYYTGRMGKFREDPSISQRALERAMKEYPYLSYQYIEAANDLDLNFGGKNSSGNDIDFNKIKADAREKYLPKTYTFDDGKFVVKAGDKVTEEKIKRLYWASKEVKAQFMRVVQNDKALEEGNPDDILTVVIYNSPEEYKLNRIINGFSTDNGGIYIENIGTFFTYERTPEESIYTLEELFRHEFTHYLQGRYVVPGMWGQGEFYQEGVLTWYEEGTAEFFAGSTRTDGIKPRKSVTQGLAYDRNNRMSLYGVLHAKYGSWDFYNYGFALSNYMYNNNMGMFNKMTNYIKNNDVSGYKDYIASMSSDYGLNDKYQDYMDSLLNNIDNLDVPLVSDEYVNGHEAKDINEITNDIKEVSNIKDLSSNVEKSQFFTTYDMRGTYVGGRSQGEENDWKDMNSKLNDILKELSKKSWNGYKTVTAYFVNHKVDGNGNYVYDVVFHGMNTDTNTDVHVNKEPKAVIKSDSSVIVEEEINFDGTESKDEDGEIKAYEWDFGDGEKSNEAKATHKYNKTGEYEVKLTVTDNNGGINTESKKIKVVEDKPVEVINESEPNNDFEKANQIAKSNMLVKGTLSEEDYSDKYYFDVAKKGNVKITLNNLNSVGITWTLYKEGDLNNYVLYATGNDGTVLKGEKTLEPGRYYLSVYTYDNQSGTYTVNVKGNLKNEVKETAKDAIKEVENNNDFDKAMKVDSNSKIVGTLSNDDLKDIYSIDIQNPSDLNIVVENLDNIKMNWLLYSADDLSNYVDYANADGNKLSNTCKLNPGKYYLCVYQFENSGTGNYIVNLQNK.

An N-terminal signal peptide occupies residues M1 to A39. Residues A40–R86 constitute a propeptide that is removed on maturation. The segment at A87 to M761 is S1 metalloprotease domain. The tract at residues Y93–G367 is activator domain. Positions D377–N646 are catalytic subdomain. E477 provides a ligand contact to Ca(2+). Residue H502 coordinates Zn(2+). E503 is a catalytic residue. H506 is a Zn(2+) binding site. Ca(2+) contacts are provided by G510, V514, and G516. Zn(2+) is bound at residue E534. Residues D654 to T767 form a helper subdomain region. Residues N762–P860 form an S2 domain region. Residues N772, K773, D800, D802, D841, E866, E868, N870, D894, D897, E993, E995, N997, L1016, D1020, K1022, and D1023 each contribute to the Ca(2+) site. Residues E774–E862 enclose the PKD domain. The S3a collagen-binding domain stretch occupies residues N865–L979. Positions K992–K1104 are S3b collagen-binding domain.

It belongs to the peptidase M9B family. Collagenase subfamily. Ca(2+) serves as cofactor. Requires Zn(2+) as cofactor.

It localises to the secreted. The catalysed reaction is Digestion of native collagen in the triple helical region at Xaa-|-Gly bonds. With synthetic peptides, a preference is shown for Gly at P3 and P1', Pro and Ala at P2 and P2', and hydroxyproline, Ala or Arg at P3'.. Functionally, clostridial collagenases are among the most efficient degraders of eukaryotic collagen known; saprophytes use collagen as a carbon source while pathogens additionally digest collagen to aid in host colonization. Has both tripeptidylcarboxypeptidase on Gly-X-Y and endopeptidase activities; the endopeptidase cuts within the triple helix region of collagen while tripeptidylcarboxypeptidase successively digests the exposed ends, thus clostridial collagenases can digest large sections of collagen. This is Collagenase ColA (colA) from Clostridium perfringens (strain 13 / Type A).